The chain runs to 540 residues: MELFIVESPTKAKTIQKFLGKGFLVKATLGHVKDLPEKELGVDLRTLKAKYVYKRGKKKLVEQLKKLSRRSSIVYLGTDPDREGEAIAYFLKKDLEKVNKNIKRAVFYEITPEAIRESIRNAGDVNMNLVYAQFARRILDRLIGYLISPILWKEFKNYKLSAGRVQSPALRLIVEREREIQNFKVKKYYYVKALLRKGSEEFWAIYDYRYENPSDAKIIAKKLEKGYFSVYKVEKKKEKVSPPKPFITSDLQSEANAKFGFSSERTQKLAQELYEKGYITYPRTDSYRMNEKKAKEFMNYIEKKYGKEYVGRLRRFREKATAQGAHECIRPTSLREEIPEREELRLLYDLIFRRTIASLMKEMLLEREKVTVEAITPELKHPVYLVAKGLKIVFDGWSRVYPSEITEEKLPELYEGDLLDLVKTTLEERKTQPPPRYTEGTLIKTLEKLGIGRPSTYATIVKTLKERGYVEVKKKALVPTEIAFQVVEFLMERFPTLMDYKFTAQMEEKLDLVEEGKLNWKSVVYEFMEKIFGKELEMVR.

The 110-residue stretch at 1-110 (MELFIVESPT…NIKRAVFYEI (110 aa)) folds into the Toprim domain. The Mg(2+) site is built by glutamate 7 and aspartate 79. One can recognise a Topo IA-type catalytic domain in the interval 126 to 536 (NMNLVYAQFA…FMEKIFGKEL (411 aa)). The interaction with DNA stretch occupies residues 161-166 (SAGRVQ). The O-(5'-phospho-DNA)-tyrosine intermediate role is filled by tyrosine 281.

Belongs to the type IA topoisomerase family. Monomer. Requires Mg(2+) as cofactor.

It carries out the reaction ATP-independent breakage of single-stranded DNA, followed by passage and rejoining.. Its function is as follows. Releases the supercoiling and torsional tension of DNA, which is introduced during the DNA replication and transcription, by transiently cleaving and rejoining one strand of the DNA duplex. Introduces a single-strand break via transesterification at a target site in duplex DNA. The scissile phosphodiester is attacked by the catalytic tyrosine of the enzyme, resulting in the formation of a DNA-(5'-phosphotyrosyl)-enzyme intermediate and the expulsion of a 3'-OH DNA strand. The free DNA strand then undergoes passage around the unbroken strand, thus removing DNA supercoils. Finally, in the religation step, the DNA 3'-OH attacks the covalent intermediate to expel the active-site tyrosine and restore the DNA phosphodiester backbone. This is DNA topoisomerase 1 from Aquifex aeolicus (strain VF5).